Here is a 267-residue protein sequence, read N- to C-terminus: DNA repair protein RecO (267 aa).

Belongs to the RecO family.

Functionally, involved in DNA repair and RecF pathway recombination. The polypeptide is DNA repair protein RecO (Mesoplasma florum (strain ATCC 33453 / NBRC 100688 / NCTC 11704 / L1) (Acholeplasma florum)).